We begin with the raw amino-acid sequence, 187 residues long: Auxin-binding protein T92 (187 aa).

An N-terminal signal peptide occupies residues 1–20 (MARHIIILVAVFWFATAEAS). A disulfide bond links Cys22 and Cys177. 3 residues coordinate Zn(2+): His78, His80, and Glu84. An N-linked (GlcNAc...) asparagine glycan is attached at Asn117. His128 lines the Zn(2+) pocket. Residues 184–187 (KDEL) carry the Prevents secretion from ER motif.

In terms of assembly, homodimer.

Its subcellular location is the endoplasmic reticulum lumen. Functionally, this is probably a receptor for the plant hormone auxin. This is Auxin-binding protein T92 (T92) from Nicotiana tabacum (Common tobacco).